Here is a 123-residue protein sequence, read N- to C-terminus: MATAAGAAYFQRGSLFWFTVITLSFGYYTWVVFWPQSIPYQNLGPLGPFTQYLVDHHHTLLCNGYWLAWLIHVGESLYAIVLCKHKGITSGRAQLLWFLQTFFFGIASLTILIAYKGKRQKQT.

Residue Ala2 is modified to N-acetylalanine. 3 helical membrane-spanning segments follow: residues 15 to 35 (LFWF…VFWP), 61 to 81 (LCNG…YAIV), and 95 to 115 (LLWF…LIAY).

The protein localises to the membrane. This Pongo abelii (Sumatran orangutan) protein is Transmembrane protein 254 (TMEM254).